The following is a 501-amino-acid chain: Zinc finger protein PLAG1 (501 aa).

The tract at residues 1 to 30 (MATVIPGDLSEVRDTQKVPSGKRKRGETKP) is disordered. Residues 22-25 (KRKR) carry the Nuclear localization signal motif. 7 C2H2-type zinc fingers span residues 34–56 (FPCQ…SYSH), 62–86 (YKCT…MATH), 92–114 (HKCN…LHTH), 121–143 (FKCE…LALH), 150–172 (LTCK…LKTH), 185–207 (HQCE…MVVH), and 213–236 (FLCQ…KKSH). Low complexity-rich tracts occupy residues 366-380 (SGMP…ASSS) and 455-467 (TQLP…PQDP). Disordered regions lie at residues 366–406 (SGMP…GSVP) and 447–474 (QEEA…IGLG).

This sequence belongs to the krueppel C2H2-type zinc-finger protein family. As to expression, expressed in nephroblastoma.

The protein resides in the nucleus. Functionally, transcription factor and proto-oncogene whose activation results in up-regulation of target genes, such as IGFII, leading to uncontrolled cell proliferation. This Gallus gallus (Chicken) protein is Zinc finger protein PLAG1 (PLAG1).